The following is a 217-amino-acid chain: 3,4-dihydroxy-2-butanone 4-phosphate synthase (217 aa).

Residues 37-38 (RE), Asp42, 150-154 (RGGHT), and Glu174 contribute to the D-ribulose 5-phosphate site. Glu38 contacts Mg(2+). Position 153 (His153) interacts with Mg(2+).

Belongs to the DHBP synthase family. As to quaternary structure, homodimer. It depends on Mg(2+) as a cofactor. Mn(2+) serves as cofactor.

It carries out the reaction D-ribulose 5-phosphate = (2S)-2-hydroxy-3-oxobutyl phosphate + formate + H(+). It participates in cofactor biosynthesis; riboflavin biosynthesis; 2-hydroxy-3-oxobutyl phosphate from D-ribulose 5-phosphate: step 1/1. Functionally, catalyzes the conversion of D-ribulose 5-phosphate to formate and 3,4-dihydroxy-2-butanone 4-phosphate. The chain is 3,4-dihydroxy-2-butanone 4-phosphate synthase from Salmonella paratyphi A (strain ATCC 9150 / SARB42).